A 140-amino-acid polypeptide reads, in one-letter code: Cystatin-C (140 aa).

Residues Met1–Ala20 form the signal peptide. Positions Gln75–Gly79 match the Secondary area of contact motif. Cystine bridges form between Cys93/Cys103 and Cys117/Cys137. N-linked (GlcNAc...) asparagine glycosylation is present at Asn99.

This sequence belongs to the cystatin family.

The protein resides in the secreted. As an inhibitor of cysteine proteinases, this protein is thought to serve an important physiological role as a local regulator of this enzyme activity. Known to inhibit cathepsin B, H, and L. The sequence is that of Cystatin-C (Cst3) from Rattus norvegicus (Rat).